The primary structure comprises 82 residues: Cyclin-dependent protein kinase inhibitor SMR5 (82 aa).

The interval 1 to 26 (MEEKNYDDGDTVTVDDDYQMGCTTPT) is disordered. Positions 8–18 (DGDTVTVDDDY) are enriched in acidic residues.

As to quaternary structure, interacts with CDKA-1 and D-type cyclins. In terms of tissue distribution, expressed in columella cells in the roots and in root meristems after induction.

In terms of biological role, probable cyclin-dependent protein kinase (CDK) inhibitor that functions as a repressor of mitosis in the endoreduplication cell cycle. Acts as a potent cell cycle inhibitor, regulating a hydroxyurea-dependent checkpoint in leaves. Essential to activate a high-light-dependent cell cycle checkpoint. This is Cyclin-dependent protein kinase inhibitor SMR5 from Arabidopsis thaliana (Mouse-ear cress).